The chain runs to 57 residues: Insulin (57 aa).

3 disulfides stabilise this stretch: cysteine 12–cysteine 43, cysteine 24–cysteine 56, and cysteine 42–cysteine 47.

This sequence belongs to the insulin family. Heterodimer of a B chain and an A chain linked by two disulfide bonds.

Its subcellular location is the secreted. Insulin decreases blood glucose concentration. It increases cell permeability to monosaccharides, amino acids and fatty acids. It accelerates glycolysis, the pentose phosphate cycle, and glycogen synthesis in liver. The chain is Insulin (ins) from Lampetra fluviatilis (European river lamprey).